Consider the following 861-residue polypeptide: Probable beta-glucosidase A (861 aa).

An N-terminal signal peptide occupies residues 1–19 (MKLGWIEVAALAAASVVSA). N-linked (GlcNAc...) asparagine glycans are attached at residues asparagine 62, asparagine 212, and asparagine 253. The active site involves aspartate 281. Residues asparagine 316, asparagine 323, asparagine 355, asparagine 443, asparagine 524, asparagine 543, asparagine 565, asparagine 669, and asparagine 713 are each glycosylated (N-linked (GlcNAc...) asparagine). The tract at residues 730–754 (DSKYIPEGATDGSAQPRLPASGGAG) is disordered. Asparagine 846 carries an N-linked (GlcNAc...) asparagine glycan.

The protein belongs to the glycosyl hydrolase 3 family.

The protein localises to the secreted. It catalyses the reaction Hydrolysis of terminal, non-reducing beta-D-glucosyl residues with release of beta-D-glucose.. Its pathway is glycan metabolism; cellulose degradation. In terms of biological role, beta-glucosidases are one of a number of cellulolytic enzymes involved in the degradation of cellulosic biomass. Catalyzes the last step releasing glucose from the inhibitory cellobiose. This Aspergillus oryzae (strain ATCC 42149 / RIB 40) (Yellow koji mold) protein is Probable beta-glucosidase A (bglA).